The primary structure comprises 60 residues: Potassium channel toxin alpha-KTx 29.1 (60 aa).

Positions 1–28 (MKSVCGVLIILVVLTTMLSISTFSTVGA) are cleaved as a signal peptide. 3 disulfides stabilise this stretch: Cys32/Cys51, Cys40/Cys56, and Cys44/Cys58.

This sequence belongs to the short scorpion toxin superfamily. Potassium channel inhibitor family. Alpha-KTx 29 subfamily. Expressed by the venom gland.

It localises to the secreted. In terms of biological role, weakly inhibits the Kv1.3/KCNA3 channel (1 uM of the toxin inhibits currents by 13.2%) and Kv7.1/KCNQ1 channel (10 uM of the toxin inhibits currents by 27.7%). The sequence is that of Potassium channel toxin alpha-KTx 29.1 from Lychas mucronatus (Chinese swimming scorpion).